A 108-amino-acid chain; its full sequence is Nucleoid-associated protein Rmet_2128 (108 aa).

A compositionally biased stretch (polar residues) spans Thr86 to Ser96. Positions Thr86 to Phe108 are disordered. Residues Pro99–Phe108 are compositionally biased toward pro residues.

The protein belongs to the YbaB/EbfC family. As to quaternary structure, homodimer.

It is found in the cytoplasm. Its subcellular location is the nucleoid. Binds to DNA and alters its conformation. May be involved in regulation of gene expression, nucleoid organization and DNA protection. The protein is Nucleoid-associated protein Rmet_2128 of Cupriavidus metallidurans (strain ATCC 43123 / DSM 2839 / NBRC 102507 / CH34) (Ralstonia metallidurans).